We begin with the raw amino-acid sequence, 443 residues long: ATP-dependent protease ATPase subunit HslU (443 aa).

Residues I18, 60-65 (GVGKTE), D256, E321, and R393 each bind ATP.

The protein belongs to the ClpX chaperone family. HslU subfamily. In terms of assembly, a double ring-shaped homohexamer of HslV is capped on each side by a ring-shaped HslU homohexamer. The assembly of the HslU/HslV complex is dependent on binding of ATP.

It is found in the cytoplasm. Functionally, ATPase subunit of a proteasome-like degradation complex; this subunit has chaperone activity. The binding of ATP and its subsequent hydrolysis by HslU are essential for unfolding of protein substrates subsequently hydrolyzed by HslV. HslU recognizes the N-terminal part of its protein substrates and unfolds these before they are guided to HslV for hydrolysis. The sequence is that of ATP-dependent protease ATPase subunit HslU from Pectobacterium carotovorum subsp. carotovorum (strain PC1).